The chain runs to 149 residues: D-aminoacyl-tRNA deacylase (149 aa).

The Gly-cisPro motif, important for rejection of L-amino acids motif lies at 137–138; the sequence is GP.

It belongs to the DTD family. In terms of assembly, homodimer.

It localises to the cytoplasm. The catalysed reaction is glycyl-tRNA(Ala) + H2O = tRNA(Ala) + glycine + H(+). It carries out the reaction a D-aminoacyl-tRNA + H2O = a tRNA + a D-alpha-amino acid + H(+). In terms of biological role, an aminoacyl-tRNA editing enzyme that deacylates mischarged D-aminoacyl-tRNAs. Also deacylates mischarged glycyl-tRNA(Ala), protecting cells against glycine mischarging by AlaRS. Acts via tRNA-based rather than protein-based catalysis; rejects L-amino acids rather than detecting D-amino acids in the active site. By recycling D-aminoacyl-tRNA to D-amino acids and free tRNA molecules, this enzyme counteracts the toxicity associated with the formation of D-aminoacyl-tRNA entities in vivo and helps enforce protein L-homochirality. This Thermotoga petrophila (strain ATCC BAA-488 / DSM 13995 / JCM 10881 / RKU-1) protein is D-aminoacyl-tRNA deacylase.